The chain runs to 366 residues: tRNA(Met) cytidine acetate ligase (366 aa).

ATP is bound by residues 7-20, Gly-96, Asn-152, and Arg-175; that span reads IAEF…HKYL.

This sequence belongs to the TmcAL family.

Its subcellular location is the cytoplasm. The catalysed reaction is cytidine(34) in elongator tRNA(Met) + acetate + ATP = N(4)-acetylcytidine(34) in elongator tRNA(Met) + AMP + diphosphate. Its function is as follows. Catalyzes the formation of N(4)-acetylcytidine (ac(4)C) at the wobble position of elongator tRNA(Met), using acetate and ATP as substrates. First activates an acetate ion to form acetyladenylate (Ac-AMP) and then transfers the acetyl group to tRNA to form ac(4)C34. In Streptococcus mutans serotype c (strain ATCC 700610 / UA159), this protein is tRNA(Met) cytidine acetate ligase.